The primary structure comprises 400 residues: Subtilisin-like protease 11 (400 aa).

Residues 1-19 (MGLFKVIFTAVAALSAVDA) form the signal peptide. A propeptide spanning residues 20–117 (AELLSSAKSK…VEHDRHVYIS (98 aa)) is cleaved from the precursor. In terms of domain architecture, Inhibitor I9 spans 35–116 (SYLVVMKDSV…FVEHDRHVYI (82 aa)). A Peptidase S8 domain is found at 127–400 (SWGLGRVSHR…NKLLYNRSGK (274 aa)). N-linked (GlcNAc...) asparagine glycosylation is present at Asn-138. The active-site Charge relay system is the Asp-159. An N-linked (GlcNAc...) asparagine glycan is attached at Asn-181. The Charge relay system role is filled by His-191. 2 N-linked (GlcNAc...) asparagine glycosylation sites follow: Asn-252 and Asn-337. Ser-346 (charge relay system) is an active-site residue. Asn-388 and Asn-396 each carry an N-linked (GlcNAc...) asparagine glycan.

This sequence belongs to the peptidase S8 family.

Its subcellular location is the secreted. Its function is as follows. Secreted subtilisin-like serine protease with keratinolytic activity that contributes to pathogenicity. This Trichophyton verrucosum (strain HKI 0517) protein is Subtilisin-like protease 11 (SUB11).